Consider the following 135-residue polypeptide: MSKQPATNKKPVKAKKKAFQNVPSGIAHVKATFNNTIIAITDPSGRVISWASAGKVNFSGSRKSSAFAATVAAQDAAKTASSLGMKEVEVNLKGPGAGRESAVRGLQSAGLTITAIRDTTPVPHNGCRPRKRRRV.

This sequence belongs to the universal ribosomal protein uS11 family. Part of the 30S ribosomal subunit. Interacts with proteins S7 and S18. Binds to IF-3.

In terms of biological role, located on the platform of the 30S subunit, it bridges several disparate RNA helices of the 16S rRNA. Forms part of the Shine-Dalgarno cleft in the 70S ribosome. This Protochlamydia amoebophila (strain UWE25) protein is Small ribosomal subunit protein uS11.